A 361-amino-acid chain; its full sequence is Putative dual-specificity RNA methyltransferase RlmN (361 aa).

The Proton acceptor role is filled by glutamate 91. The Radical SAM core domain maps to 97 to 329; that stretch reads QHYGLSVCVT…KKKGVNCVVR (233 aa). Residues cysteine 111, cysteine 115, and cysteine 118 each coordinate [4Fe-4S] cluster. Residues 163–164, serine 195, 218–220, and threonine 296 contribute to the S-adenosyl-L-methionine site; these read GE and SLH.

It belongs to the radical SAM superfamily. RlmN family. [4Fe-4S] cluster is required as a cofactor.

Its subcellular location is the cytoplasm. It carries out the reaction adenosine(2503) in 23S rRNA + 2 reduced [2Fe-2S]-[ferredoxin] + 2 S-adenosyl-L-methionine = 2-methyladenosine(2503) in 23S rRNA + 5'-deoxyadenosine + L-methionine + 2 oxidized [2Fe-2S]-[ferredoxin] + S-adenosyl-L-homocysteine. The catalysed reaction is adenosine(37) in tRNA + 2 reduced [2Fe-2S]-[ferredoxin] + 2 S-adenosyl-L-methionine = 2-methyladenosine(37) in tRNA + 5'-deoxyadenosine + L-methionine + 2 oxidized [2Fe-2S]-[ferredoxin] + S-adenosyl-L-homocysteine. Specifically methylates position 2 of adenine 2503 in 23S rRNA and position 2 of adenine 37 in tRNAs. The sequence is that of Putative dual-specificity RNA methyltransferase RlmN from Streptococcus pneumoniae (strain CGSP14).